A 187-amino-acid chain; its full sequence is Ribosome-recycling factor (187 aa).

It belongs to the RRF family.

It is found in the cytoplasm. Responsible for the release of ribosomes from messenger RNA at the termination of protein biosynthesis. May increase the efficiency of translation by recycling ribosomes from one round of translation to another. The polypeptide is Ribosome-recycling factor (Nitrosococcus oceani (strain ATCC 19707 / BCRC 17464 / JCM 30415 / NCIMB 11848 / C-107)).